A 443-amino-acid chain; its full sequence is 23S rRNA (uracil(1939)-C(5))-methyltransferase RlmD (443 aa).

The TRAM domain occupies 4-66 (QNRFDRTSFQ…RHFDEARVVE (63 aa)). Positions 79, 85, 88, and 167 each coordinate [4Fe-4S] cluster. S-adenosyl-L-methionine is bound by residues Q275, F304, N309, E325, D352, and D373. The Nucleophile role is filled by C399.

The protein belongs to the class I-like SAM-binding methyltransferase superfamily. RNA M5U methyltransferase family. RlmD subfamily.

It catalyses the reaction uridine(1939) in 23S rRNA + S-adenosyl-L-methionine = 5-methyluridine(1939) in 23S rRNA + S-adenosyl-L-homocysteine + H(+). In terms of biological role, catalyzes the formation of 5-methyl-uridine at position 1939 (m5U1939) in 23S rRNA. This Xylella fastidiosa (strain 9a5c) protein is 23S rRNA (uracil(1939)-C(5))-methyltransferase RlmD.